We begin with the raw amino-acid sequence, 651 residues long: Beta-glucuronidase (651 aa).

Residues 1–22 (MSRGPAGAWVALGPLLWTCGLA) form the signal peptide. N-linked (GlcNAc...) asparagine glycans are attached at residues N172 and N419. E450 (proton donor) is an active-site residue. N630 carries N-linked (GlcNAc...) asparagine glycosylation.

Belongs to the glycosyl hydrolase 2 family. In terms of assembly, homotetramer.

The protein localises to the lysosome. The catalysed reaction is a beta-D-glucuronoside + H2O = D-glucuronate + an alcohol. With respect to regulation, inhibited by L-aspartic acid. In terms of biological role, plays an important role in the degradation of dermatan and keratan sulfates. This is Beta-glucuronidase (GUSB) from Canis lupus familiaris (Dog).